Reading from the N-terminus, the 210-residue chain is C4-dicarboxylate TRAP transporter small permease protein DctQ (210 aa).

The next 4 membrane-spanning stretches (helical) occupy residues 13–33 (EGLIAFLLAAMTLVTFVYVVL), 77–97 (ALFAWLIFLGIAYGVRTAGHL), 113–133 (VLGVIACLACLGYAGLLCVAS), and 160–180 (IGLIVPVGFALVFIRFAEILV).

Belongs to the TRAP transporter small permease family. In terms of assembly, the complex comprises the extracytoplasmic solute receptor protein DctP, and the two transmembrane proteins DctQ and DctM.

The protein resides in the cell inner membrane. Functionally, part of the tripartite ATP-independent periplasmic (TRAP) transport system DctPQM involved in C4-dicarboxylates uptake. The polypeptide is C4-dicarboxylate TRAP transporter small permease protein DctQ (Pseudomonas aeruginosa (strain ATCC 15692 / DSM 22644 / CIP 104116 / JCM 14847 / LMG 12228 / 1C / PRS 101 / PAO1)).